Here is a 265-residue protein sequence, read N- to C-terminus: Ribosomal RNA large subunit methyltransferase E (265 aa).

Residues Gly-83, Trp-85, Asp-106, Asp-122, and Asp-146 each contribute to the S-adenosyl-L-methionine site. The active-site Proton acceptor is Lys-186. A disordered region spans residues 230 to 265 (KGREAGPPSGGSERPVDVSKDLSARSDSEGPGDAEG). The span at 243–257 (RPVDVSKDLSARSDS) shows a compositional bias: basic and acidic residues.

Belongs to the class I-like SAM-binding methyltransferase superfamily. RNA methyltransferase RlmE family.

It localises to the cytoplasm. The catalysed reaction is uridine(2552) in 23S rRNA + S-adenosyl-L-methionine = 2'-O-methyluridine(2552) in 23S rRNA + S-adenosyl-L-homocysteine + H(+). In terms of biological role, specifically methylates the uridine in position 2552 of 23S rRNA at the 2'-O position of the ribose in the fully assembled 50S ribosomal subunit. This Mesorhizobium japonicum (strain LMG 29417 / CECT 9101 / MAFF 303099) (Mesorhizobium loti (strain MAFF 303099)) protein is Ribosomal RNA large subunit methyltransferase E.